Here is a 264-residue protein sequence, read N- to C-terminus: Versicolorin reductase stcU (264 aa).

Ile23, Asp69, Asn96, and Arg129 together coordinate NADP(+). Residues Ser145 and Ser146 each act as proton donor in the active site. Residues Tyr160, Lys164, Ile193, and Thr195 each contribute to the NADP(+) site. The active-site Proton acceptor is the Tyr160. Lys164 functions as the Lowers pKa of active site Tyr in the catalytic mechanism.

This sequence belongs to the short-chain dehydrogenases/reductases (SDR) family.

It catalyses the reaction (4S,8R)-2,13,16,20-tetrahydroxy-7,9-dioxapentacyclo[10.8.0.0(3,10).0(4,8).0(14,19)]icosa-1(12),2,5,10,13,16,19-heptaen-18-one + NADPH + H(+) = (4S,8R,16R)-2,13,16,20-tetrahydroxy-7,9-dioxapentacyclo[10.8.0.0(3,10).0(4,8).0(14,19)]icosa-1(12),2,5,10,13,19-hexaen-18-one + NADP(+). It functions in the pathway mycotoxin biosynthesis; sterigmatocystin biosynthesis. In terms of biological role, versicolorin reductase; part of the gene cluster that mediates the biosynthesis of sterigmatocystin (ST), a polyketide-derived furanocoumarin which is part of the most toxic and carcinogenic compounds among the known mycotoxins. The first step in the biosynthesis of sterigmatocystin is the production of hexanoate by the fatty acid synthase (FAS) units stcJ and stcK. The polyketide backbone is assembled by the non-reducing polyketide synthase stcA by condensation of the starter hexanoyl-CoA and 7 malonyl-CoA extender units followed by cyclization and release of norsolorinic acid. Norsolorinic acid is the first stable intermediate in the biosynthesis of sterigmatocystin and is converted into averantin (AVN) by the ketoreductase stcE which reduces the hexanoate ketone to an alcohol. Averantin is then oxidized into 5'-hydroxyaverantin (HAVN) by the cytochrome P450 monooxygenase stcF. 5'-hydroxyaverantin is further converted to 5'-oxyaverantin (OAVN) by the 5'-hydroxyaverantin dehydrogenase stcG. The next step is the conversion of OAVN into averufin (AVF) which is catalyzed by a yet to be identified enzyme. The cytochrome P450 monooxygenase stcB and the flavin-binding monooxygenase stcW are both required for the conversion of averufin to 1-hydroxyversicolorone. The esterase stcI probably catalyzes the formation of versiconal hemiacetal acetate from 1-hydroxyversicolorone. The oxydoreductase stcN then probably catalyzes the biosynthetic step from versiconal to versicolorin B (VERB). The next step is performed by the versicolorin B desaturase stcL to produce versicolorin A (VERA). The ketoreductase stcU and the cytochrome P450 monooxygenase stcS are involved in the conversion of versicolorin A to demethylsterigmatocystin. The Baeyer-Villiger oxidas stcQ and the reductase stcR might be involved in the biosynthetic step from versicolorin A to demethylsterigmatocystin. The final step in the biosynthesis of sterigmatocystin is the methylation of demethylsterigmatocystin catalyzed by the methyltransferase stcP. This is Versicolorin reductase stcU from Emericella nidulans (strain FGSC A4 / ATCC 38163 / CBS 112.46 / NRRL 194 / M139) (Aspergillus nidulans).